A 418-amino-acid chain; its full sequence is Beta-arrestin-1 (418 aa).

The interval 1–163 (MGDKGTRVFK…LEEKIHKRNS (163 aa)) is interaction with SRC. Positions 45–86 (PEYLKERRVYVTLTCAFRYGREDLDVLGLTFRKDLFVANVQS) are interaction with CHRM2. The residue at position 47 (Tyr47) is a Phosphotyrosine. Positions 250, 255, 324, and 326 each coordinate 1D-myo-inositol hexakisphosphate. The interval 318–418 (IVSYKVKVKL…GTGSPHLNNR (101 aa)) is interaction with TRAF6. 2 disordered regions span residues 353–374 (HPKP…PVDT) and 397–418 (KGMK…LNNR). The segment covering 355–366 (KPKEEPPHREVP) has biased composition (basic and acidic residues). Position 412 is a phosphoserine (Ser412). A Phosphoserine; by GRK5 modification is found at Ser412.

This sequence belongs to the arrestin family. Monomer. Homodimer. Homooligomer; the self-association is mediated by InsP6-binding. Heterooligomer with ARRB2; the association is mediated by InsP6-binding. Interacts with ADRB2 (phosphorylated). Interacts with CHRM2 (phosphorylated). Interacts with LHCGR. Interacts with CYTH2 and CASR. Interacts with AP2B1 (dephosphorylated at 'Tyr-737'); phosphorylation of AP2B1 at 'Tyr-737' disrupts the interaction. Interacts (dephosphorylated at Ser-412) with CLTC. Interacts with CCR2 and GRK2. Interacts with CRR5. Interacts with PTAFR (phosphorylated on serine residues). Interacts with CLTC and MAP2K3. Interacts with CREB1. Interacts with TRAF6. Interacts with IGF1R and MDM2. Interacts with C5AR1. Interacts with PDE4D. Interacts with SRC (via the SH3 domain and the protein kinase domain); the interaction is independent of the phosphorylation state of SRC C-terminus. Interacts with TACR1. Interacts with RAF1. Interacts with CHUK, IKBKB and MAP3K14. Interacts with DVL1; the interaction is enhanced by phosphorylation of DVL1. Interacts with DVL2; the interaction is enhanced by phosphorylation of DVL2. Interacts with IGF1R. Associates with MAP kinase p38. Part of a MAPK signaling complex consisting of TACR1, ARRB1, SRC, MAPK1 (activated) and MAPK3 (activated). Part of a MAPK signaling complex consisting of F2RL1, ARRB1, RAF1, MAPK1 (activated) and MAPK3 (activated). Interacts with GPR143. Interacts with MAP2K4/MKK4. Interacts with HCK and CXCR1 (phosphorylated). Interacts with ACKR3 and ACKR4. Interacts with ARRDC1; the interaction is direct. Interacts with GPR61, GPR62 and GPR135. Post-translationally, constitutively phosphorylated at Ser-412 in the cytoplasm. At the plasma membrane, is rapidly dephosphorylated, a process that is required for clathrin binding and beta-2 adrenergic receptor/ADRB2 endocytosis but not for ADRB2 binding and desensitization. Once internalized, is rephosphorylated. In terms of processing, the ubiquitination status appears to regulate the formation and trafficking of beta-arrestin-GPCR complexes and signaling. Ubiquitination appears to occur GPCR-specific. Ubiquitinated by MDM2; the ubiquitination is required for rapid internalization of ADRB2. Deubiquitinated by USP33; the deubiquitination leads to a dissociation of the beta-arrestin-GPCR complex. Stimulation of a class A GPCR, such as ADRB2, induces transient ubiquitination and subsequently promotes association with USP33. Predominantly localized in neuronal tissues and in the spleen.

It localises to the cytoplasm. Its subcellular location is the nucleus. The protein localises to the cell membrane. The protein resides in the membrane. It is found in the clathrin-coated pit. It localises to the cell projection. Its subcellular location is the pseudopodium. The protein localises to the cytoplasmic vesicle. Its function is as follows. Functions in regulating agonist-mediated G-protein coupled receptor (GPCR) signaling by mediating both receptor desensitization and resensitization processes. During homologous desensitization, beta-arrestins bind to the GPRK-phosphorylated receptor and sterically preclude its coupling to the cognate G-protein; the binding appears to require additional receptor determinants exposed only in the active receptor conformation. The beta-arrestins target many receptors for internalization by acting as endocytic adapters (CLASPs, clathrin-associated sorting proteins) and recruiting the GPRCs to the adapter protein 2 complex 2 (AP-2) in clathrin-coated pits (CCPs). However, the extent of beta-arrestin involvement appears to vary significantly depending on the receptor, agonist and cell type. Internalized arrestin-receptor complexes traffic to intracellular endosomes, where they remain uncoupled from G-proteins. Two different modes of arrestin-mediated internalization occur. Class A receptors, like ADRB2, OPRM1, ENDRA, D1AR and ADRA1B dissociate from beta-arrestin at or near the plasma membrane and undergo rapid recycling. Class B receptors, like AVPR2, AGTR1, NTSR1, TRHR and TACR1 internalize as a complex with arrestin and traffic with it to endosomal vesicles, presumably as desensitized receptors, for extended periods of time. Receptor resensitization then requires that receptor-bound arrestin is removed so that the receptor can be dephosphorylated and returned to the plasma membrane. Involved in internalization of P2RY4 and UTP-stimulated internalization of P2RY2. Involved in phosphorylation-dependent internalization of OPRD1 ands subsequent recycling. Involved in the degradation of cAMP by recruiting cAMP phosphodiesterases to ligand-activated receptors. Beta-arrestins function as multivalent adapter proteins that can switch the GPCR from a G-protein signaling mode that transmits short-lived signals from the plasma membrane via small molecule second messengers and ion channels to a beta-arrestin signaling mode that transmits a distinct set of signals that are initiated as the receptor internalizes and transits the intracellular compartment. Acts as a signaling scaffold for MAPK pathways such as MAPK1/3 (ERK1/2). ERK1/2 activated by the beta-arrestin scaffold is largely excluded from the nucleus and confined to cytoplasmic locations such as endocytic vesicles, also called beta-arrestin signalosomes. Recruits c-Src/SRC to ADRB2 resulting in ERK activation. GPCRs for which the beta-arrestin-mediated signaling relies on both ARRB1 and ARRB2 (codependent regulation) include ADRB2, F2RL1 and PTH1R. For some GPCRs the beta-arrestin-mediated signaling relies on either ARRB1 or ARRB2 and is inhibited by the other respective beta-arrestin form (reciprocal regulation). Inhibits ERK1/2 signaling in AGTR1- and AVPR2-mediated activation (reciprocal regulation). Is required for SP-stimulated endocytosis of NK1R and recruits c-Src/SRC to internalized NK1R resulting in ERK1/2 activation, which is required for the antiapoptotic effects of SP. Is involved in proteinase-activated F2RL1-mediated ERK activity. Acts as a signaling scaffold for the AKT1 pathway. Is involved in alpha-thrombin-stimulated AKT1 signaling. Is involved in IGF1-stimulated AKT1 signaling leading to increased protection from apoptosis. Involved in activation of the p38 MAPK signaling pathway and in actin bundle formation. Involved in F2RL1-mediated cytoskeletal rearrangement and chemotaxis. Involved in AGTR1-mediated stress fiber formation by acting together with GNAQ to activate RHOA. Appears to function as signaling scaffold involved in regulation of MIP-1-beta-stimulated CCR5-dependent chemotaxis. Involved in attenuation of NF-kappa-B-dependent transcription in response to GPCR or cytokine stimulation by interacting with and stabilizing CHUK. May serve as nuclear messenger for GPCRs. Involved in OPRD1-stimulated transcriptional regulation by translocating to CDKN1B and FOS promoter regions and recruiting EP300 resulting in acetylation of histone H4. Involved in regulation of LEF1 transcriptional activity via interaction with DVL1 and/or DVL2 Also involved in regulation of receptors other than GPCRs. Involved in Toll-like receptor and IL-1 receptor signaling through the interaction with TRAF6 which prevents TRAF6 autoubiquitination and oligomerization required for activation of NF-kappa-B and JUN. Binds phosphoinositides. Binds inositolhexakisphosphate (InsP6). Involved in IL8-mediated granule release in neutrophils. Required for atypical chemokine receptor ACKR2-induced RAC1-LIMK1-PAK1-dependent phosphorylation of cofilin (CFL1) and for the up-regulation of ACKR2 from endosomal compartment to cell membrane, increasing its efficiency in chemokine uptake and degradation. Involved in the internalization of the atypical chemokine receptor ACKR3. Negatively regulates the NOTCH signaling pathway by mediating the ubiquitination and degradation of NOTCH1 by ITCH. Participates in the recruitment of the ubiquitin-protein ligase to the receptor. This Rattus norvegicus (Rat) protein is Beta-arrestin-1.